The primary structure comprises 185 residues: Iron-sulfur assembly protein 2 (185 aa).

Residues Cys89, Cys175, and Cys177 each coordinate Fe cation.

This sequence belongs to the HesB/IscA family.

Its subcellular location is the mitochondrion matrix. In terms of biological role, involved in the assembly of mitochondrial and cytoplasmic iron-sulfur proteins. Probably involved in the binding of an intermediate of Fe/S cluster assembly. The sequence is that of Iron-sulfur assembly protein 2 (ISA2) from Saccharomyces cerevisiae (strain ATCC 204508 / S288c) (Baker's yeast).